Reading from the N-terminus, the 188-residue chain is HGPRTase-like protein 1 (188 aa).

This sequence belongs to the purine/pyrimidine phosphoribosyltransferase family. Archaeal HPRT subfamily.

Its function is as follows. May catalyze a purine salvage reaction, the substrate is unknown. The sequence is that of HGPRTase-like protein 1 from Haloquadratum walsbyi (strain DSM 16854 / JCM 12705 / C23).